The sequence spans 521 residues: MMLMMLPFIGSVSVSESLVAMTTMCLVYLILKFFQTEIPEGLLRLPGPKPLPIIGNVLGLGSKPYLSLTDMSKRYGHVFQIQIGMRPVVVLSGSETVRQALIKQGDDFAGRPDLYSFRFINAGKSLAFSTDQAGVWRARRKLAYSALRSFSNLEGTTPEYSCVLEEHICKEGEYLIKQLNTVMKADGSFDPFRHIVVSVANVICGMCFGRRYDHDDQELVGLVTLSDEFGRVVGSGNPADFIPILQYLPSAAMKNFLRINSRFTEFVQKIVTEHYTTFDKDNIRDITDSLIDHCEDRKLDENSNVQMSDEKIVGIVNDLFGAGFDTVSTALSWSVMYLVAHPEIQERLYQEIEDKVGLDRMPLLSDKPNLPFLEAFILEILRHSSFLPFTIPHCTTKDTSLNGYFIPKDTCVFINQWQINHDPELWKDPSSFNPDRFLSADGSEVNKLDGEKVMAFGMGKRRCIGEVIARNEVYLFLAIIIQKLHFLPIPGEKLDMTPEYGLTMKHKRCHLKATMRARNEH.

F229 is a substrate binding site. C463 contacts heme.

This sequence belongs to the cytochrome P450 family. The cofactor is heme.

It localises to the endoplasmic reticulum membrane. The protein localises to the microsome membrane. It catalyses the reaction an organic molecule + reduced [NADPH--hemoprotein reductase] + O2 = an alcohol + oxidized [NADPH--hemoprotein reductase] + H2O + H(+). Functionally, cytochromes P450 are a group of heme-thiolate monooxygenases. They oxidize a variety of structurally unrelated compounds, including steroids, fatty acids, and xenobiotics. This chain is Cytochrome P450 1A1 (cyp1a1), found in Platichthys flesus (European flounder).